The sequence spans 574 residues: Cyclomaltodextrinase (574 aa).

Ca(2+)-binding residues include Asn144, Asp146, Asn149, Asp150, Gly168, and Asp170. Residues His243 and Arg323 each contribute to the substrate site. Asp325 serves as the catalytic Nucleophile. Catalysis depends on Glu354, which acts as the Proton donor. Substrate contacts are provided by residues 420–421 (HD), Asp465, and Arg469.

It belongs to the glycosyl hydrolase 13 family. As to quaternary structure, monomer. Requires Ca(2+) as cofactor.

It catalyses the reaction cyclomaltodextrin + H2O = linear maltodextrin. Its function is as follows. Hydrolyzes cyclodextrins. Can also act on linear maltodextrins, with the exception of maltose. This Thermoanaerobacter pseudethanolicus (strain ATCC 33223 / 39E) (Clostridium thermohydrosulfuricum) protein is Cyclomaltodextrinase.